We begin with the raw amino-acid sequence, 604 residues long: Phosphoprotein (604 aa).

Disordered stretches follow at residues 1 to 22 (MESDAKNYQIMDSWEEEPRDKS) and 39 to 360 (DPQE…EESN). Positions 22–42 (STNISSALNIIEFILSTDPQE) are N0 binding. Polar residues-rich tracts occupy residues 47 to 61 (NDTINTRTQQLSATI) and 74 to 90 (KVSGSTDKNRQSGSSHE). Positions 91–101 (CTTEAKDRNID) are enriched in basic and acidic residues. Over residues 129–144 (GSITDSKNGTQNTENI) the composition is skewed to polar residues. The segment covering 147–163 (NEIRKMDKDSIERKMRQ) has biased composition (basic and acidic residues). The segment covering 197 to 207 (TPDTRSMSVVT) has biased composition (polar residues). The span at 245-267 (KGKDWFKKSRDTDNQTSTSDHKP) shows a compositional bias: basic and acidic residues. Composition is skewed to low complexity over residues 277–300 (KTTTTNTDTKGQTETQTESSETQS) and 317–328 (TSTTPPTTTPRS). Over residues 330 to 360 (RTKESIRTNSESKPKTQKTIGKERKDTEESN) the composition is skewed to basic and acidic residues. Residues 400–470 (VDTASKIDFL…SLISNLKIMT (71 aa)) are multimerization. A coiled-coil region spans residues 424 to 451 (LIQIQNEMLNLKADLKRMDESHRRLIEN). A l protein binding region spans residues 450 to 483 (ENQREQLSLITSLISNLKIMTERGGKKDQNESNE). The tract at residues 585-604 (KSDEEVSELMDMFNEDVNNC) is interaction with the nucleocapsid (N-RNA).

It belongs to the respirovirus P protein family. As to quaternary structure, homotetramer. Interacts (via multimerization domain) with polymerase L; this interaction forms the polymerase L-P complex. Interacts (via N-terminus) with N0; this interaction allows P to chaperon N0 to avoid N polymerization before encapsidation. Interacts (via C-terminus) with N-RNA template; this interaction positions the polymerase on the template. Interacts with host PI4KB; this interaction allows P to recruit PI4KB to the viral factories to generate PI4P to facilitate viral replication.

Essential cofactor of the RNA polymerase L that plays a central role in the transcription and replication by forming the polymerase complex with RNA polymerase L and recruiting L to the genomic N-RNA template for RNA synthesis. Also plays a central role in the encapsidation of nascent RNA chains by forming the encapsidation complex with the nucleocapsid protein N (N-P complex). Acts as a chaperone for newly synthesized free N protein, so-called N0, allowing encapsidation of nascent RNA chains during replication. The nucleoprotein protein N prevents excessive phosphorylation of P, which leads to down-regulation of viral transcription/ replication. Participates, together with N, in the formation of viral factories (viroplasms), which are large inclusions in the host cytoplasm where replication takes place. Recruits host PI4KB and remodel the host endoplasmic reticulum membrane to form viral replication factories. The sequence is that of Phosphoprotein (P/V/D) from Human parainfluenza 3 virus (strain Wash/47885/57) (HPIV-3).